Here is a 211-residue protein sequence, read N- to C-terminus: Regulator of G-protein signaling 2 (211 aa).

2 disordered regions span residues 14 to 33 (RPMD…REKM) and 49 to 68 (LQNS…KQQA). The tract at residues 32–66 (KMKRTLLKDWKTRLSYFLQNSSTPGKPKTGKKSKQ) is necessary for membrane association. The segment at 79–116 (LWSEAFDELLASKYGLAAFRAFLKSEFCEENIEFWLAC) is necessary to inhibit protein synthesis. The region spanning 83 to 199 (AFDELLASKY…LESEFYQDLC (117 aa)) is the RGS domain.

As to quaternary structure, interacts with GNAQ. Does not interact with GNAI1 and GNAI3. Interacts with EIF2B5. Interacts with PRKG1 (isoform alpha). Post-translationally, phosphorylated by protein kinase C. Phosphorylation by PRKG1 leads to activation of RGS2 activity. Expressed in acute myelogenous leukemia (AML) and in acute lymphoblastic leukemia (ALL).

Its subcellular location is the cell membrane. The protein resides in the cytoplasm. It is found in the nucleus. The protein localises to the nucleolus. It localises to the mitochondrion. Functionally, regulates G protein-coupled receptor signaling cascades. Inhibits signal transduction by increasing the GTPase activity of G protein alpha subunits, thereby driving them into their inactive GDP-bound form. It is involved in the negative regulation of the angiotensin-activated signaling pathway. Plays a role in the regulation of blood pressure in response to signaling via G protein-coupled receptors and GNAQ. Plays a role in regulating the constriction and relaxation of vascular smooth muscle. Binds EIF2B5 and blocks its activity, thereby inhibiting the translation of mRNA into protein. The sequence is that of Regulator of G-protein signaling 2 (RGS2) from Homo sapiens (Human).